We begin with the raw amino-acid sequence, 839 residues long: NT-3 growth factor receptor (839 aa).

Residues 1 to 31 (MDVSLCPAKCSFWRIFLLGSVWLDYVGSVLA) form the signal peptide. Disulfide bonds link Cys32-Cys38 and Cys36-Cys45. The Extracellular portion of the chain corresponds to 32-429 (CPANCVCSKT…TVTHKPEEDT (398 aa)). Asn72 and Asn79 each carry an N-linked (GlcNAc...) asparagine glycan. 2 LRR repeats span residues 104-125 (GLQKLTIKNSGLRSIQPRAFAK) and 128-149 (HLRYINLSSNRLTTLSWQLFQT). Residues Asn133 and Asn163 are each glycosylated (N-linked (GlcNAc...) asparagine). The LRRCT domain maps to 160–209 (NFFNCSCDIRWMQLWQEQGEAKLNSQNLYCINADGSQLPLFRMNISQCDL). Disulfide bonds link Cys164-Cys189 and Cys166-Cys207. 7 N-linked (GlcNAc...) asparagine glycosylation sites follow: Asn203, Asn218, Asn232, Asn259, Asn267, Asn272, and Asn294. Ig-like C2-type domains are found at residues 210–300 (PEIS…VALT) and 309–382 (SLEE…IAKN). A disulfide bond links Cys231 and Cys284. Residues Cys320 and Cys362 are joined by a disulfide bond. Residues Asn375 and Asn388 are each glycosylated (N-linked (GlcNAc...) asparagine). A helical membrane pass occupies residues 430–453 (FGVSIAVGLAAFACVLLVVLFVMI). The Cytoplasmic segment spans residues 454-839 (NKYGRRSKFG…ATPIYLDILG (386 aa)). Ser493 carries the phosphoserine modification. Position 516 is a phosphotyrosine; by autocatalysis (Tyr516). The 302-residue stretch at 538–839 (IVLKRELGEG…ATPIYLDILG (302 aa)) folds into the Protein kinase domain. ATP contacts are provided by residues 544 to 552 (LGEGAFGKV) and Lys572. The active-site Proton acceptor is Asp679. Phosphotyrosine; by autocatalysis is present on residues Tyr705, Tyr709, and Tyr710.

Belongs to the protein kinase superfamily. Tyr protein kinase family. Insulin receptor subfamily. As to quaternary structure, exists in a dynamic equilibrium between monomeric (low affinity) and dimeric (high affinity) structures. Binds SH2B2. Interacts with SQSTM1 and KIDINS220. Interacts with PTPRS. Interacts with MAPK8IP3/JIP3. Ligand-mediated auto-phosphorylation. Widely expressed but mainly in nervous tissue. Isoform 2 is expressed at higher levels in adult brain than in fetal brain.

It is found in the membrane. The enzyme catalyses L-tyrosyl-[protein] + ATP = O-phospho-L-tyrosyl-[protein] + ADP + H(+). In terms of biological role, receptor tyrosine kinase involved in nervous system and probably heart development. Upon binding of its ligand NTF3/neurotrophin-3, NTRK3 autophosphorylates and activates different signaling pathways, including the phosphatidylinositol 3-kinase/AKT and the MAPK pathways, that control cell survival and differentiation. This chain is NT-3 growth factor receptor (NTRK3), found in Homo sapiens (Human).